Here is a 377-residue protein sequence, read N- to C-terminus: Succinyl-diaminopimelate desuccinylase (377 aa).

His67 is a Zn(2+) binding site. The active site involves Asp69. Asp100 is a Zn(2+) binding site. Glu134 (proton acceptor) is an active-site residue. Residues Glu135, Glu163, and His349 each contribute to the Zn(2+) site.

The protein belongs to the peptidase M20A family. DapE subfamily. As to quaternary structure, homodimer. Requires Zn(2+) as cofactor. Co(2+) serves as cofactor.

The enzyme catalyses N-succinyl-(2S,6S)-2,6-diaminopimelate + H2O = (2S,6S)-2,6-diaminopimelate + succinate. The protein operates within amino-acid biosynthesis; L-lysine biosynthesis via DAP pathway; LL-2,6-diaminopimelate from (S)-tetrahydrodipicolinate (succinylase route): step 3/3. Its function is as follows. Catalyzes the hydrolysis of N-succinyl-L,L-diaminopimelic acid (SDAP), forming succinate and LL-2,6-diaminopimelate (DAP), an intermediate involved in the bacterial biosynthesis of lysine and meso-diaminopimelic acid, an essential component of bacterial cell walls. The polypeptide is Succinyl-diaminopimelate desuccinylase (Buchnera aphidicola subsp. Baizongia pistaciae (strain Bp)).